Consider the following 131-residue polypeptide: Small ribosomal subunit protein eS8 (131 aa).

Positions 1 to 37 are disordered; it reads MKLGAFYKGGDLKKPSGGKKRRVRRTKKKALGGGPPQ. Residues 16 to 30 are compositionally biased toward basic residues; that stretch reads SGGKKRRVRRTKKKA.

Belongs to the eukaryotic ribosomal protein eS8 family. In terms of assembly, part of the 30S ribosomal subunit.

This Pyrobaculum neutrophilum (strain DSM 2338 / JCM 9278 / NBRC 100436 / V24Sta) (Thermoproteus neutrophilus) protein is Small ribosomal subunit protein eS8.